An 87-amino-acid polypeptide reads, in one-letter code: Small ribosomal subunit protein uS17 (87 aa).

This sequence belongs to the universal ribosomal protein uS17 family. Part of the 30S ribosomal subunit.

Its function is as follows. One of the primary rRNA binding proteins, it binds specifically to the 5'-end of 16S ribosomal RNA. The polypeptide is Small ribosomal subunit protein uS17 (Lacticaseibacillus casei (strain BL23) (Lactobacillus casei)).